A 319-amino-acid chain; its full sequence is Syntaxin ufe1 (319 aa).

The Cytoplasmic portion of the chain corresponds to 1 to 297; that stretch reads MTSRTNEFFG…IKAKSRSSRT (297 aa). The t-SNARE coiled-coil homology domain occupies 228 to 290; sequence LQEFEHTMER…SGGNQQLIKA (63 aa). A helical; Anchor for type IV membrane protein transmembrane segment spans residues 298 to 315; that stretch reads ARLLFCIFTVMGLLLLSL. The Lumenal segment spans residues 316–319; it reads DRIV.

Belongs to the syntaxin family. Component of a SNARE complex consisting of ufe1, use1, sec20 and sec22 or ykt6. Interacts with sad1.

The protein localises to the endoplasmic reticulum membrane. Syntaxin required for targeting and fusion of Golgi-derived retrograde transport vesicles with the ER. The sequence is that of Syntaxin ufe1 (ufe1) from Schizosaccharomyces pombe (strain 972 / ATCC 24843) (Fission yeast).